A 351-amino-acid chain; its full sequence is Histidinol-phosphate aminotransferase (351 aa).

K221 bears the N6-(pyridoxal phosphate)lysine mark.

Belongs to the class-II pyridoxal-phosphate-dependent aminotransferase family. Histidinol-phosphate aminotransferase subfamily. As to quaternary structure, homodimer. Pyridoxal 5'-phosphate serves as cofactor.

It catalyses the reaction L-histidinol phosphate + 2-oxoglutarate = 3-(imidazol-4-yl)-2-oxopropyl phosphate + L-glutamate. Its pathway is amino-acid biosynthesis; L-histidine biosynthesis; L-histidine from 5-phospho-alpha-D-ribose 1-diphosphate: step 7/9. The sequence is that of Histidinol-phosphate aminotransferase from Staphylococcus epidermidis (strain ATCC 35984 / DSM 28319 / BCRC 17069 / CCUG 31568 / BM 3577 / RP62A).